The following is a 228-amino-acid chain: Indole-3-glycerol phosphate synthase (228 aa).

It belongs to the TrpC family.

It catalyses the reaction 1-(2-carboxyphenylamino)-1-deoxy-D-ribulose 5-phosphate + H(+) = (1S,2R)-1-C-(indol-3-yl)glycerol 3-phosphate + CO2 + H2O. Its pathway is amino-acid biosynthesis; L-tryptophan biosynthesis; L-tryptophan from chorismate: step 4/5. This is Indole-3-glycerol phosphate synthase from Pyrococcus furiosus (strain ATCC 43587 / DSM 3638 / JCM 8422 / Vc1).